The chain runs to 898 residues: Endoplasmic reticulum metallopeptidase 1 (898 aa).

An N-acetylmethionine modification is found at M1. The interval 1–55 (MEWSSESAAVRRHRGTAERREGEAAASHRQREASAQEDAKGVGRMWGKTENGGGS) is disordered. Topologically, residues 1 to 66 (MEWSSESAAV…VAKTALSEAR (66 aa)) are cytoplasmic. A compositionally biased stretch (basic and acidic residues) spans 29-41 (RQREASAQEDAKG). The helical transmembrane segment at 67–87 (TALALALYLLALRALVQLSLQ) threads the bilayer. The Lumenal portion of the chain corresponds to 88 to 393 (RLVLSRTSGL…SSSEYRHGSM (306 aa)). N-linked (GlcNAc...) asparagine glycosylation occurs at N176. A disulfide bridge links C198 with C216. Zn(2+) contacts are provided by H199 and D211. Catalysis depends on E245, which acts as the Proton acceptor. Zn(2+) contacts are provided by E246, E272, and H348. The helical transmembrane segment at 394-414 (VFFDVLGLLVIAYPSRVGSII) threads the bilayer. The Cytoplasmic segment spans residues 415 to 451 (NYMVVMAVVLYLGKKLLRPKHRNANYMRDFLCGLGIT). A helical transmembrane segment spans residues 452–472 (FISWFTSLVTVLIIAVFISLI). Residues 473–480 (GQSLSWYN) are Lumenal-facing. The helical transmembrane segment at 481-501 (YFYIAVCLYGTATVAKIIFIH) threads the bilayer. Topologically, residues 502-515 (TLAKRFYYMNASDL) are cytoplasmic. Residues 516-538 (YLGELFFDTSLFVHCAFLVALTY) form a helical membrane-spanning segment. The Lumenal segment spans residues 539-542 (QGFC). A helical membrane pass occupies residues 543–562 (SAFMSAVWVVFPLLTKLCVY). The Cytoplasmic segment spans residues 563–573 (KDFKKHGAQGR). Residues 574–594 (FVALYLLGMFIPYLYGLYLIW) form a helical membrane-spanning segment. Topologically, residues 595 to 615 (AVFEMFTPILGRSGSEIPPDV) are lumenal. A helical membrane pass occupies residues 616 to 636 (VLASILAVCVMILSSYFITFI). Residues 637–645 (YLVNSTKKT) lie on the Cytoplasmic side of the membrane. A helical membrane pass occupies residues 646-666 (ILTLILVCAVTFLLVCSGAFF). The Lumenal segment spans residues 667-898 (PYSSNPESPK…WVSTYSLFVF (232 aa)). N-linked (GlcNAc...) asparagine glycosylation occurs at N724.

Belongs to the peptidase M28 family. The cofactor is Zn(2+).

It localises to the endoplasmic reticulum membrane. In terms of biological role, within the ovary, required for the organization of somatic cells and oocytes into discrete follicular structures. The polypeptide is Endoplasmic reticulum metallopeptidase 1 (Mus musculus (Mouse)).